The sequence spans 337 residues: Glyceraldehyde-3-phosphate dehydrogenase (337 aa).

Residues 12–13 (RI), Asp34, and Arg79 each bind NAD(+). Residues 150-152 (SCT), Thr181, 210-211 (TG), and Arg233 contribute to the D-glyceraldehyde 3-phosphate site. The Nucleophile role is filled by Cys151. Asn315 provides a ligand contact to NAD(+).

Belongs to the glyceraldehyde-3-phosphate dehydrogenase family. Homotetramer.

The protein resides in the cytoplasm. It carries out the reaction D-glyceraldehyde 3-phosphate + phosphate + NAD(+) = (2R)-3-phospho-glyceroyl phosphate + NADH + H(+). It functions in the pathway carbohydrate degradation; glycolysis; pyruvate from D-glyceraldehyde 3-phosphate: step 1/5. This Omphalotus olearius (Jack o'lantern) protein is Glyceraldehyde-3-phosphate dehydrogenase (GPD).